Reading from the N-terminus, the 406-residue chain is Tryptophan synthase beta chain (406 aa).

K99 bears the N6-(pyridoxal phosphate)lysine mark.

The protein belongs to the TrpB family. In terms of assembly, tetramer of two alpha and two beta chains. Pyridoxal 5'-phosphate serves as cofactor.

It carries out the reaction (1S,2R)-1-C-(indol-3-yl)glycerol 3-phosphate + L-serine = D-glyceraldehyde 3-phosphate + L-tryptophan + H2O. Its pathway is amino-acid biosynthesis; L-tryptophan biosynthesis; L-tryptophan from chorismate: step 5/5. Functionally, the beta subunit is responsible for the synthesis of L-tryptophan from indole and L-serine. The chain is Tryptophan synthase beta chain from Chelativorans sp. (strain BNC1).